The following is a 395-amino-acid chain: Argininosuccinate synthase (395 aa).

ATP contacts are provided by residues 10 to 18 and Ala-37; that span reads AYSGGLDTS. Positions 88 and 93 each coordinate L-citrulline. An ATP-binding site is contributed by Gly-118. The L-aspartate site is built by Thr-120, Asn-124, and Asp-125. Asn-124 lines the L-citrulline pocket. L-citrulline-binding residues include Arg-128, Ser-179, Ser-188, Glu-264, and Tyr-276.

It belongs to the argininosuccinate synthase family. Type 1 subfamily. In terms of assembly, homotetramer.

It localises to the cytoplasm. The enzyme catalyses L-citrulline + L-aspartate + ATP = 2-(N(omega)-L-arginino)succinate + AMP + diphosphate + H(+). It participates in amino-acid biosynthesis; L-arginine biosynthesis; L-arginine from L-ornithine and carbamoyl phosphate: step 2/3. In Pelagibacter ubique (strain HTCC1062), this protein is Argininosuccinate synthase.